The following is a 173-amino-acid chain: Small ribosomal subunit protein mS25 (173 aa).

This sequence belongs to the mitochondrion-specific ribosomal protein mS25 family. Component of the mitochondrial ribosome small subunit (28S) which comprises a 12S rRNA and about 30 distinct proteins.

It is found in the mitochondrion. This is Small ribosomal subunit protein mS25 (MRPS25) from Bos taurus (Bovine).